The chain runs to 310 residues: Thiamine-monophosphate kinase (310 aa).

Positions 24, 38, and 39 each coordinate Mg(2+). Substrate is bound at residue D46. The Mg(2+) site is built by D67 and D115. Residues 114-115 and R138 contribute to the ATP site; that span reads GD. A Mg(2+)-binding site is contributed by D203. S205 contributes to the ATP binding site. A Mg(2+)-binding site is contributed by D206. Substrate-binding residues include E251 and W306.

It belongs to the thiamine-monophosphate kinase family.

The enzyme catalyses thiamine phosphate + ATP = thiamine diphosphate + ADP. It functions in the pathway cofactor biosynthesis; thiamine diphosphate biosynthesis; thiamine diphosphate from thiamine phosphate: step 1/1. Catalyzes the ATP-dependent phosphorylation of thiamine-monophosphate (TMP) to form thiamine-pyrophosphate (TPP), the active form of vitamin B1. This Nitrosopumilus maritimus (strain SCM1) protein is Thiamine-monophosphate kinase.